The following is a 361-amino-acid chain: Phospho-N-acetylmuramoyl-pentapeptide-transferase (361 aa).

A run of 10 helical transmembrane segments spans residues 28–48 (LAII…IKFL), 74–94 (TMGG…LADL), 99–119 (IWIT…DDYA), 133–153 (SKLL…EYLD), 168–188 (LSLD…VGSS), 203–223 (VPIA…GNLI), 236–256 (TGEL…FLWF), 263–283 (VFMG…ISVI), 288–308 (IVLA…ILQV), and 338–358 (KVVI…LSSL).

This sequence belongs to the glycosyltransferase 4 family. MraY subfamily. It depends on Mg(2+) as a cofactor.

It is found in the cell inner membrane. The enzyme catalyses UDP-N-acetyl-alpha-D-muramoyl-L-alanyl-gamma-D-glutamyl-meso-2,6-diaminopimeloyl-D-alanyl-D-alanine + di-trans,octa-cis-undecaprenyl phosphate = di-trans,octa-cis-undecaprenyl diphospho-N-acetyl-alpha-D-muramoyl-L-alanyl-D-glutamyl-meso-2,6-diaminopimeloyl-D-alanyl-D-alanine + UMP. It functions in the pathway cell wall biogenesis; peptidoglycan biosynthesis. Its function is as follows. Catalyzes the initial step of the lipid cycle reactions in the biosynthesis of the cell wall peptidoglycan: transfers peptidoglycan precursor phospho-MurNAc-pentapeptide from UDP-MurNAc-pentapeptide onto the lipid carrier undecaprenyl phosphate, yielding undecaprenyl-pyrophosphoryl-MurNAc-pentapeptide, known as lipid I. This chain is Phospho-N-acetylmuramoyl-pentapeptide-transferase, found in Rickettsia felis (strain ATCC VR-1525 / URRWXCal2) (Rickettsia azadi).